Here is a 291-residue protein sequence, read N- to C-terminus: Maintenance of mitochondrial morphology protein 1 (291 aa).

Residues 1 to 16 (MPNNYVFSLQPTFTQG) are Lumenal-facing. Residues 17 to 37 (LILGQLSILVLLGMILKFLFL) traverse the membrane as a helical segment. Topologically, residues 38-291 (DSTQHPFESS…KKEMSDADLS (254 aa)) are cytoplasmic. The SMP-LTD domain occupies 73–277 (NAESAEWFNV…LPGLASVVDV (205 aa)).

It belongs to the MMM1 family. As to quaternary structure, homodimer. Component of the ER-mitochondria encounter structure (ERMES) or MDM complex, composed of MMM1, MDM10, MDM12 and MDM34. An MMM1 homodimer associates with one molecule of MDM12 on each side in a pairwise head-to-tail manner, and the SMP-LTD domains of MMM1 and MDM12 generate a continuous hydrophobic tunnel for phospholipid trafficking.

It localises to the endoplasmic reticulum membrane. In terms of biological role, component of the ERMES/MDM complex, which serves as a molecular tether to connect the endoplasmic reticulum (ER) and mitochondria. Components of this complex are involved in the control of mitochondrial shape and protein biogenesis, and function in nonvesicular lipid trafficking between the ER and mitochondria. The MDM12-MMM1 subcomplex functions in the major beta-barrel assembly pathway that is responsible for biogenesis of all outer membrane beta-barrel proteins, and acts in a late step after the SAM complex. The MDM10-MDM12-MMM1 subcomplex further acts in the TOM40-specific pathway after the action of the MDM12-MMM1 complex. Essential for establishing and maintaining the structure of mitochondria and maintenance of mtDNA nucleoids. The polypeptide is Maintenance of mitochondrial morphology protein 1 (Laccaria bicolor (strain S238N-H82 / ATCC MYA-4686) (Bicoloured deceiver)).